We begin with the raw amino-acid sequence, 297 residues long: Vacuolar protein sorting-associated protein 26 (297 aa).

Belongs to the VPS26 family. As to quaternary structure, component of the retromer complex, composed of VPS26, VPS29 and VPS35. As part of the retromer complex, interacts with the sorting receptor SORTLR/sortilin. Interacts with GTPase RAB7.

In terms of biological role, plays a role in vesicular protein sorting. Component of the membrane-associated retromer complex which is essential in endosome-to-Golgi retrograde transport. The chain is Vacuolar protein sorting-associated protein 26 from Plasmodium falciparum (isolate 3D7).